We begin with the raw amino-acid sequence, 799 residues long: LPS-assembly protein LptD (799 aa).

The N-terminal stretch at 1-34 (MMHELDLRPHLARFAQRPLALLAWALLQGTSVNA) is a signal peptide.

Belongs to the LptD family. In terms of assembly, component of the lipopolysaccharide transport and assembly complex. Interacts with LptE and LptA.

Its subcellular location is the cell outer membrane. Its function is as follows. Together with LptE, is involved in the assembly of lipopolysaccharide (LPS) at the surface of the outer membrane. In Albidiferax ferrireducens (strain ATCC BAA-621 / DSM 15236 / T118) (Rhodoferax ferrireducens), this protein is LPS-assembly protein LptD.